The primary structure comprises 104 residues: Pyrimidine/purine nucleoside phosphorylase (104 aa).

This sequence belongs to the nucleoside phosphorylase PpnP family.

It catalyses the reaction a purine D-ribonucleoside + phosphate = a purine nucleobase + alpha-D-ribose 1-phosphate. The catalysed reaction is adenosine + phosphate = alpha-D-ribose 1-phosphate + adenine. The enzyme catalyses cytidine + phosphate = cytosine + alpha-D-ribose 1-phosphate. It carries out the reaction guanosine + phosphate = alpha-D-ribose 1-phosphate + guanine. It catalyses the reaction inosine + phosphate = alpha-D-ribose 1-phosphate + hypoxanthine. The catalysed reaction is thymidine + phosphate = 2-deoxy-alpha-D-ribose 1-phosphate + thymine. The enzyme catalyses uridine + phosphate = alpha-D-ribose 1-phosphate + uracil. It carries out the reaction xanthosine + phosphate = alpha-D-ribose 1-phosphate + xanthine. Catalyzes the phosphorolysis of diverse nucleosides, yielding D-ribose 1-phosphate and the respective free bases. Can use uridine, adenosine, guanosine, cytidine, thymidine, inosine and xanthosine as substrates. Also catalyzes the reverse reactions. This is Pyrimidine/purine nucleoside phosphorylase from Colwellia psychrerythraea (strain 34H / ATCC BAA-681) (Vibrio psychroerythus).